We begin with the raw amino-acid sequence, 382 residues long: D-galactonate dehydratase (382 aa).

Asp183 contacts Mg(2+). Residue His185 is the Proton donor of the active site. Positions 209 and 235 each coordinate Mg(2+). His285 acts as the Proton acceptor in catalysis.

Belongs to the mandelate racemase/muconate lactonizing enzyme family. GalD subfamily. Requires Mg(2+) as cofactor.

It catalyses the reaction D-galactonate = 2-dehydro-3-deoxy-D-galactonate + H2O. The protein operates within carbohydrate acid metabolism; D-galactonate degradation; D-glyceraldehyde 3-phosphate and pyruvate from D-galactonate: step 1/3. Its function is as follows. Catalyzes the dehydration of D-galactonate to 2-keto-3-deoxy-D-galactonate. This Verminephrobacter eiseniae (strain EF01-2) protein is D-galactonate dehydratase.